Reading from the N-terminus, the 721-residue chain is Protein mu-NS (721 aa).

The interaction with sigma-NS stretch occupies residues 1–13; it reads MASFKGFSANTVP. Positions 1–38 are RNA-binding; sequence MASFKGFSANTVPVSKAKRDISSLAATPGLRSQSFTPS. The tract at residues 14 to 40 is interaction with mu-2; sequence VSKAKRDISSLAATPGLRSQSFTPSVD. The segment at 471–721 is involved in the formation of factory-like inclusions; that stretch reads SNDVTDGIKL…IDFSVPTDEL (251 aa). Coiled-coil stretches lie at residues 522–559 and 628–684; these read PLLSQLRELSSEVTRLQMELSRAQSLNAQLEADVKSAQ and LMNG…ALNQ.

Belongs to the orthoreovirus mu-NS protein family. In terms of assembly, interacts with mu-2. Interacts with sigma-NS; in viral factories. Interacts with the inner capsid proteins lambda-1 and sigma-2, and outer capsid protein lambda-2; in viral factories. In terms of processing, the N-terminus is blocked.

The protein resides in the host cytoplasm. In terms of biological role, non-structural protein implicated with protein sigma-NS in forming the matrix of viral factories, which are large inclusions in the host cytoplasm where replication intermediates are assembled and viral RNA replication takes place. Together with mu-2, recruits the other core proteins to these factories. Binds RNA and recruits viral mRNAs to sites of viral replication. The chain is Protein mu-NS (M3) from Reovirus type 3 (strain Dearing) (T3D).